A 479-amino-acid chain; its full sequence is MRLTNRRFSTFLGNALPSKKKGFIFMSQLLYLRTFSTHTSYLRSSWQAILNYKYIYQNAEAVQRNCINRNLQAIAETVPKIRSLIDEKESLKNEFFPLLSLKKEITLQIERCSDPNERGKLVNEAKGLKKKTEEYNKIISKVTNDLYQYCLAVPNTTLPTVPVGPEDKAVVVQKIGSPLVKKTGSLKDHLQIANEGINLEDAAQASGHSFCYTTGDIALLEMAITNYAMDFAISKGWCPVIPPTIVRTDIALACGFQPRDEEGQQIYELDSYTSPLVSSPKQCLIGTAEISLAALGFKKTFNNFTERKVVGVSRAYRREAGARGKENRGLYRLHEFTKVELFAWTHPSRSSEMFNEIVNFQKEFVETLKIPARILNMPTAELGSSASQKYDIEAWMPARQSYGEITSASNCLEYQARRLLTRYRNDKDSGFVHTLNGTAAAIPRLIIAILENHQQEDGTVKVPETLVPYIHKEYLFKAK.

Residues 1–42 constitute a mitochondrion transit peptide; the sequence is MRLTNRRFSTFLGNALPSKKKGFIFMSQLLYLRTFSTHTSYL. 287–289 is a binding site for L-serine; that stretch reads TAE. 317–319 contacts ATP; sequence RRE. Position 340 (Glu340) interacts with L-serine. 404 to 407 is an ATP binding site; it reads EITS. L-serine is bound at residue Thr438.

It belongs to the class-II aminoacyl-tRNA synthetase family. Type-1 seryl-tRNA synthetase subfamily. In terms of assembly, homodimer. The tRNA molecule probably binds across the dimer.

Its subcellular location is the mitochondrion matrix. It carries out the reaction tRNA(Ser) + L-serine + ATP = L-seryl-tRNA(Ser) + AMP + diphosphate + H(+). Its function is as follows. Catalyzes the attachment of serine to tRNA(Ser). Is also probably able to aminoacylate tRNA(Sec) with serine, to form the misacylated tRNA L-seryl-tRNA(Sec), which will be further converted into selenocysteinyl-tRNA(Sec). This chain is Serine--tRNA ligase, mitochondrial (dia4), found in Schizosaccharomyces pombe (strain 972 / ATCC 24843) (Fission yeast).